We begin with the raw amino-acid sequence, 214 residues long: GTP cyclohydrolase 1 (214 aa).

Cys-108, His-111, and Cys-179 together coordinate Zn(2+).

Belongs to the GTP cyclohydrolase I family. Toroid-shaped homodecamer, composed of two pentamers of five dimers.

It catalyses the reaction GTP + H2O = 7,8-dihydroneopterin 3'-triphosphate + formate + H(+). The protein operates within cofactor biosynthesis; 7,8-dihydroneopterin triphosphate biosynthesis; 7,8-dihydroneopterin triphosphate from GTP: step 1/1. The chain is GTP cyclohydrolase 1 from Shewanella putrefaciens (strain CN-32 / ATCC BAA-453).